A 301-amino-acid chain; its full sequence is Aldose reductase (301 aa).

NADP(+) is bound at residue glycine 11–glycine 20. Tyrosine 51 functions as the Proton donor in the catalytic mechanism. Position 111 (histidine 111) interacts with substrate. Serine 209 to asparagine 266 lines the NADP(+) pocket.

It belongs to the aldo/keto reductase family.

Its subcellular location is the cytoplasm. The catalysed reaction is an alditol + NAD(+) = an aldose + NADH + H(+). The enzyme catalyses an alditol + NADP(+) = an aldose + NADPH + H(+). Catalyzes the NADPH-dependent reduction of a wide variety of carbonyl-containing compounds to their corresponding alcohols with a broad range of catalytic efficiencies. This chain is Aldose reductase, found in Encephalitozoon cuniculi (strain GB-M1) (Microsporidian parasite).